The following is a 112-amino-acid chain: MSLRMRFKPSIENFVNLFSFSCLSFLSHEPHVYLKKASLFGSLSFVSLVKTSFGLLEINLLVAATVIHLIAPTLFEAPTTHLLEWPATVYLIMLGLRIAVLLAKQLLLLLLR.

The next 2 membrane-spanning stretches (helical) occupy residues 55–75 (LLEI…PTLF) and 91–111 (LIML…LLLL).

It is found in the membrane. This is an uncharacterized protein from Saccharomyces cerevisiae (strain ATCC 204508 / S288c) (Baker's yeast).